Reading from the N-terminus, the 548-residue chain is Alpha-1,3-mannosyl-glycoprotein 4-beta-N-acetylglucosaminyltransferase B (548 aa).

Residues 1-7 (MRLRNGT) lie on the Cytoplasmic side of the membrane. The helical; Signal-anchor for type II membrane protein transmembrane segment at 8 to 28 (FLTLLLFCLCAFLSLSWYAAL) threads the bilayer. The Lumenal segment spans residues 29 to 548 (SGQKGDVVDI…LSEIFLKKAD (520 aa)). The stretch at 36-83 (VDIYQREFLALRDRLHAAEQESLKRSKELNLVLEEIKRAVSERQALRD) forms a coiled coil. Residues N87 and N103 are each glycosylated (N-linked (GlcNAc...) asparagine).

It belongs to the glycosyltransferase 54 family. Interacts with SLC35A3. A divalent metal cation is required as a cofactor. Post-translationally, N-glycosylated.

The protein localises to the golgi apparatus membrane. The enzyme catalyses N(4)-{beta-D-GlcNAc-(1-&gt;2)-alpha-D-Man-(1-&gt;3)-[beta-D-GlcNAc-(1-&gt;2)-alpha-D-Man-(1-&gt;6)]-beta-D-Man-(1-&gt;4)-beta-D-GlcNAc-(1-&gt;4)-beta-D-GlcNAc}-L-asparaginyl-[protein] + UDP-N-acetyl-alpha-D-glucosamine = N(4)-{beta-D-GlcNAc-(1-&gt;2)-[beta-D-GlcNAc-(1-&gt;4)]-alpha-D-Man-(1-&gt;3)-[beta-D-GlcNAc-(1-&gt;2)-alpha-D-Man-(1-&gt;6)]-beta-D-Man-(1-&gt;4)-beta-D-GlcNAc-(1-&gt;4)-beta-D-GlcNAc}-L-asparaginyl-[protein] + UDP + H(+). It carries out the reaction an N(4)-{beta-D-GlcNAc-(1-&gt;2)-alpha-D-Man-(1-&gt;3)-[alpha-D-Man-(1-&gt;6)]-beta-D-Man-(1-&gt;4)-beta-D-GlcNAc-(1-&gt;4)-beta-D-GlcNAc}-L-asparaginyl-[protein] + UDP-N-acetyl-alpha-D-glucosamine = an N(4)-{beta-D-GlcNAc-(1-&gt;2)-[beta-D-GlcNAc-(1-&gt;4)]-alpha-D-Man-(1-&gt;3)-[alpha-D-Man-(1-&gt;6)]-beta-D-Man-(1-&gt;4)-beta-D-GlcNAc-(1-&gt;4)-beta-D-GlcNAc}-L-asparaginyl-[protein] + UDP + H(+). It catalyses the reaction an N(4)-{beta-D-GlcNAc-(1-&gt;2)-alpha-D-Man-(1-&gt;3)-[beta-D-GlcNAc-(1-&gt;2)-[beta-D-GlcNAc-(1-&gt;6)]-alpha-D-Man-(1-&gt;6)]-beta-D-Man-(1-&gt;4)-beta-D-GlcNAc-(1-&gt;4)-beta-D-GlcNAc}-L-asparaginyl-[protein] + UDP-N-acetyl-alpha-D-glucosamine = an N(4)-{beta-D-GlcNAc-(1-&gt;2)-[beta-D-GlcNAc-(1-&gt;4)]-alpha-D-Man-(1-&gt;3)-[beta-D-GlcNAc-(1-&gt;2)-[beta-D-GlcNAc-(1-&gt;6)]-alpha-D-Man-(1-&gt;6)]-beta-D-Man-(1-&gt;4)-beta-D-GlcNAc-(1-&gt;4)-beta-D-GlcNAc}-L-asparaginyl-[protein] + UDP + H(+). The catalysed reaction is an N(4)-{beta-D-GlcNAc-(1-&gt;2)-alpha-D-Man-(1-&gt;3)-[beta-D-GlcNAc-(1-&gt;2)-alpha-D-Man-(1-&gt;6)]-beta-D-Man-(1-&gt;4)-beta-D-GlcNAc-(1-&gt;4)-[alpha-L-Fuc-(1-&gt;6)]-beta-D-GlcNAc}-L-asparaginyl-[protein] + UDP-N-acetyl-alpha-D-glucosamine = N(4)-{beta-D-GlcNAc-(1-&gt;2)-[beta-D-GlcNAc-(1-&gt;4)]-alpha-D-Man-(1-&gt;3)-[beta-D-GlcNAc-(1-&gt;2)-alpha-D-Man-(1-&gt;6)]-beta-D-Man-(1-&gt;4)-beta-D-GlcNAc-(1-&gt;4)-[alpha-L-Fuc-(1-&gt;6)]-beta-D-GlcNAc}-asparaginyl-[protein] + UDP + H(+). The enzyme catalyses an N(4)-{beta-D-GlcNAc-(1-&gt;2)-alpha-D-Man-(1-&gt;3)-[beta-D-Gal-(1-&gt;4)-beta-D-GlcNAc-(1-&gt;2)-alpha-D-Man-(1-&gt;6)]-beta-D-Man-(1-&gt;4)-beta-D-GlcNAc-(1-&gt;4)-beta-D-GlcNAc}-L-asparaginyl-[protein] + UDP-N-acetyl-alpha-D-glucosamine = an N(4)-{beta-D-GlcNAc-(1-&gt;2)-[beta-D-GlcNAc-(1-&gt;4)]-alpha-D-Man-(1-&gt;3)-[beta-D-Gal-(1-&gt;4)-beta-D-GlcNAc-(1-&gt;2)-alpha-D-Man-(1-&gt;6)]-beta-D-Man-(1-&gt;4)-beta-D-GlcNAc-(1-&gt;4)-beta-D-GlcNAc}-L-asparaginyl-[protein] + UDP + H(+). It carries out the reaction N(4)-{beta-D-GlcNAc-(1-&gt;2)-alpha-D-Man-(1-&gt;3)-[alpha-D-Man-(1-&gt;3)-{alpha-D-Man-(1-&gt;6)}-alpha-D-Man-(1-&gt;6)]-beta-D-Man-(1-&gt;4)-beta-D-GlcNAc-(1-&gt;4)-beta-D-GlcNAc}-asparaginyl-[protein] + UDP-N-acetyl-alpha-D-glucosamine = N(4)-{beta-D-GlcNAc-(1-&gt;2)-[beta-D-GlcNAc-(1-&gt;4)]-alpha-D-Man-(1-&gt;3)-[alpha-D-Man-(1-&gt;3)-{alpha-D-Man-(1-&gt;6)}-alpha-D-Man-(1-&gt;6)]-beta-D-Man-(1-&gt;4)-beta-D-GlcNAc-(1-&gt;4)-beta-D-GlcNAc}-asparaginyl-[protein] + UDP + H(+). It catalyses the reaction N(4)-{beta-D-GlcNAc-(1-&gt;2)-alpha-D-Man-(1-&gt;3)-beta-D-Man-(1-&gt;4)-beta-D-GlcNAc-(1-&gt;4)-beta-D-GlcNAc}-asparaginyl-[protein] + UDP-N-acetyl-alpha-D-glucosamine = N(4)-{beta-D-GlcNAc-(1-&gt;2)-[beta-D-GlcNAc-(1-&gt;4)]-alpha-D-Man-(1-&gt;3)-beta-D-Man-(1-&gt;4)-beta-D-GlcNAc-(1-&gt;4)-beta-D-GlcNAc}-asparaginyl-[protein] + UDP + H(+). It participates in protein modification; protein glycosylation. Functionally, glycosyltransferase that catalyzes the transfer of GlcNAc from UDP-GlcNAc to the GlcNAcbeta1-2Manalpha1-3 arm of the core structure of N-linked glycans through a beta1-4 linkage and participates in the production of tri- and tetra-antennary N-linked sugar chains. Prefers complex-type N-glycans over hybrid-types. Has lower affinities for donors or acceptors than MGAT4A, suggesting that, under physiological conditions, it is not the main contributor in N-glycan biosynthesis. This chain is Alpha-1,3-mannosyl-glycoprotein 4-beta-N-acetylglucosaminyltransferase B, found in Mus musculus (Mouse).